An 80-amino-acid polypeptide reads, in one-letter code: MPKKNEAPASFEKALSELEQIVTHLESGDLPLEEALNEFERGVQLARQGQAKLQQAEQRVQILLSDNEDASLTPFTPDNE.

This sequence belongs to the XseB family. In terms of assembly, heterooligomer composed of large and small subunits.

It localises to the cytoplasm. It catalyses the reaction Exonucleolytic cleavage in either 5'- to 3'- or 3'- to 5'-direction to yield nucleoside 5'-phosphates.. Functionally, bidirectionally degrades single-stranded DNA into large acid-insoluble oligonucleotides, which are then degraded further into small acid-soluble oligonucleotides. This Escherichia coli O6:K15:H31 (strain 536 / UPEC) protein is Exodeoxyribonuclease 7 small subunit.